A 65-amino-acid polypeptide reads, in one-letter code: Small ribosomal subunit protein bS21A (65 aa).

The protein belongs to the bacterial ribosomal protein bS21 family.

In Francisella tularensis subsp. holarctica (strain LVS), this protein is Small ribosomal subunit protein bS21A.